The following is a 141-amino-acid chain: Small ribosomal subunit protein uS9c (141 aa).

The protein belongs to the universal ribosomal protein uS9 family.

It localises to the plastid. Its subcellular location is the chloroplast. The chain is Small ribosomal subunit protein uS9c (rps9) from Tupiella akineta (Green alga).